The sequence spans 249 residues: 1-(5-phosphoribosyl)-5-[(5-phosphoribosylamino)methylideneamino] imidazole-4-carboxamide isomerase (249 aa).

Residue Asp8 is the Proton acceptor of the active site. Asp131 functions as the Proton donor in the catalytic mechanism.

This sequence belongs to the HisA/HisF family.

Its subcellular location is the cytoplasm. The enzyme catalyses 1-(5-phospho-beta-D-ribosyl)-5-[(5-phospho-beta-D-ribosylamino)methylideneamino]imidazole-4-carboxamide = 5-[(5-phospho-1-deoxy-D-ribulos-1-ylimino)methylamino]-1-(5-phospho-beta-D-ribosyl)imidazole-4-carboxamide. Its pathway is amino-acid biosynthesis; L-histidine biosynthesis; L-histidine from 5-phospho-alpha-D-ribose 1-diphosphate: step 4/9. The sequence is that of 1-(5-phosphoribosyl)-5-[(5-phosphoribosylamino)methylideneamino] imidazole-4-carboxamide isomerase from Leptothrix cholodnii (strain ATCC 51168 / LMG 8142 / SP-6) (Leptothrix discophora (strain SP-6)).